Consider the following 367-residue polypeptide: Histidinol-phosphate aminotransferase (367 aa).

K221 carries the post-translational modification N6-(pyridoxal phosphate)lysine.

This sequence belongs to the class-II pyridoxal-phosphate-dependent aminotransferase family. Histidinol-phosphate aminotransferase subfamily. In terms of assembly, homodimer. It depends on pyridoxal 5'-phosphate as a cofactor.

The catalysed reaction is L-histidinol phosphate + 2-oxoglutarate = 3-(imidazol-4-yl)-2-oxopropyl phosphate + L-glutamate. It functions in the pathway amino-acid biosynthesis; L-histidine biosynthesis; L-histidine from 5-phospho-alpha-D-ribose 1-diphosphate: step 7/9. The polypeptide is Histidinol-phosphate aminotransferase (Paracoccus denitrificans (strain Pd 1222)).